A 115-amino-acid polypeptide reads, in one-letter code: Large ribosomal subunit protein bL20 (115 aa).

It belongs to the bacterial ribosomal protein bL20 family.

In terms of biological role, binds directly to 23S ribosomal RNA and is necessary for the in vitro assembly process of the 50S ribosomal subunit. It is not involved in the protein synthesizing functions of that subunit. This chain is Large ribosomal subunit protein bL20, found in Synechococcus sp. (strain RCC307).